Reading from the N-terminus, the 221-residue chain is UPF0319 protein CGSHiEE_03630 (221 aa).

The signal sequence occupies residues 1-21 (MKLRAVVLGLATLCTSTATFA).

It belongs to the UPF0319 family.

The polypeptide is UPF0319 protein CGSHiEE_03630 (Haemophilus influenzae (strain PittEE)).